A 145-amino-acid polypeptide reads, in one-letter code: Aminoglycoside N(6')-acetyltransferase type 1 (145 aa).

The region spanning 1–145 (MNIKPASEAS…KVVYFSKKID (145 aa)) is the N-acetyltransferase domain. Substrate-binding residues include Trp-22, Tyr-65, and Glu-78. Position 80–82 (80–82 (IYV)) interacts with acetyl-CoA. Asp-114 contributes to the substrate binding site. Asn-119 serves as a coordination point for acetyl-CoA. Residue Glu-135 participates in substrate binding.

Homodimer.

The enzyme catalyses kanamycin B + acetyl-CoA = N(6')-acetylkanamycin B + CoA + H(+). Functionally, catalyzes the transfer of an acetyl group from acetyl-CoA to the 6'-amino group of aminoglycoside molecules conferring resistance to antibiotics containing the purpurosamine ring including amikacin, kanamycin, tobramycin and netilmicin. The protein is Aminoglycoside N(6')-acetyltransferase type 1 of Acinetobacter haemolyticus.